The chain runs to 341 residues: HTH-type transcriptional repressor PurR (341 aa).

Positions 2-56 (ATIKDVAKRANVSTTTVSHVINKTRFVAEETRNAVWAAIKELHYSPSAVARSLKV) constitute an HTH lacI-type domain. Positions 4–23 (IKDVAKRANVSTTTVSHVIN) form a DNA-binding region, H-T-H motif. Residues 48–56 (SAVARSLKV) mediate DNA binding. Hypoxanthine contacts are provided by Y73, R190, T192, F221, and D275.

As to quaternary structure, homodimer.

It functions in the pathway purine metabolism; purine nucleotide biosynthesis [regulation]. Functionally, is the main repressor of the genes involved in the de novo synthesis of purine nucleotides, regulating purB, purC, purEK, purF, purHD, purL, purMN and guaBA expression. In addition, it participates in the regulation or coregulation of genes involved in de novo pyrimidine nucleotide biosynthesis, salvage and uptake (pyrC, pyrD, carAB and codBA), and of several genes encoding enzymes necessary for nucleotide and polyamine biosynthesis (prsA, glyA, gcvTHP, speA, glnB). Binds to a 16-bp palindromic sequence located within the promoter region of pur regulon genes. The consensus binding sequence is 5'-ACGCAAACGTTTTCNT-3'. PurR is allosterically activated to bind its cognate DNA by binding the purine corepressors, hypoxanthine or guanine, thereby effecting transcription repression. This Escherichia coli (strain K12) protein is HTH-type transcriptional repressor PurR (purR).